A 160-amino-acid polypeptide reads, in one-letter code: MSVSVCPCGSGNLLDACCGHYHAGTPAPDAQALMRSRYSAYVLGLIDYLVATTLPAQQAGLDRNAIAAWSAQSTWLGLEVENAEVLGGQPEHAFVTFTARWHDLEGDHQHRERSAFVQHDGRWYFIDPTVELKAGRNDPCPCNSGQKFKKCCASYWGNRA.

The protein belongs to the UPF0225 family.

The chain is UPF0225 protein PputW619_1140 from Pseudomonas putida (strain W619).